Here is a 260-residue protein sequence, read N- to C-terminus: Acetylglutamate kinase (260 aa).

Residues 46–47 (GG), R68, and N160 each bind substrate.

The protein belongs to the acetylglutamate kinase family. ArgB subfamily.

The protein localises to the cytoplasm. The catalysed reaction is N-acetyl-L-glutamate + ATP = N-acetyl-L-glutamyl 5-phosphate + ADP. The protein operates within amino-acid biosynthesis; L-arginine biosynthesis; N(2)-acetyl-L-ornithine from L-glutamate: step 2/4. In terms of biological role, catalyzes the ATP-dependent phosphorylation of N-acetyl-L-glutamate. The polypeptide is Acetylglutamate kinase (Shewanella sp. (strain ANA-3)).